Here is a 398-residue protein sequence, read N- to C-terminus: Probable transcription factor PosF21 (398 aa).

Disordered regions lie at residues 1–46 (MDKE…HDIS) and 112–150 (ATSSAQVGEPSGTAWKNETMMQTGTGSTSNPQNTVNSLG). Pro residues predominate over residues 7 to 19 (PAPPCGGLPPPSP). Residues 125–148 (AWKNETMMQTGTGSTSNPQNTVNS) show a composition bias toward polar residues. The 64-residue stretch at 201–264 (DPKRAKRIWA…NGLTVENNEL (64 aa)) folds into the bZIP domain. The segment at 203–224 (KRAKRIWANRQSAARSKERKTR) is basic motif. The leucine-zipper stretch occupies residues 229-264 (LERKVQTLQTEATTLSAQLTLLQRDTNGLTVENNEL).

This sequence belongs to the bZIP family.

It is found in the nucleus. Its function is as follows. Putative transcription factor with an activatory role. The protein is Probable transcription factor PosF21 (POSF21) of Arabidopsis thaliana (Mouse-ear cress).